The sequence spans 412 residues: Aspartate aminotransferase, cytoplasmic (412 aa).

At alanine 2 the chain carries N-acetylalanine. L-aspartate-binding residues include glycine 38, tryptophan 140, and asparagine 194. Position 258 is an N6-(pyridoxal phosphate)lysine (lysine 258). Arginine 386 contributes to the L-aspartate binding site.

This sequence belongs to the class-I pyridoxal-phosphate-dependent aminotransferase family. As to quaternary structure, homodimer. The cofactor is pyridoxal 5'-phosphate.

The protein localises to the cytoplasm. It catalyses the reaction L-aspartate + 2-oxoglutarate = oxaloacetate + L-glutamate. The enzyme catalyses L-cysteine + 2-oxoglutarate = 2-oxo-3-sulfanylpropanoate + L-glutamate. It carries out the reaction (2S)-2-aminobutanoate + 2-oxoglutarate = 2-oxobutanoate + L-glutamate. The catalysed reaction is 3-sulfino-L-alanine + 2-oxoglutarate = 3-sulfinopyruvate + L-glutamate. Functionally, biosynthesis of L-glutamate from L-aspartate or L-cysteine. Important regulator of levels of glutamate, the major excitatory neurotransmitter of the vertebrate central nervous system. Acts as a scavenger of glutamate in brain neuroprotection. The aspartate aminotransferase activity is involved in hepatic glucose synthesis during development and in adipocyte glyceroneogenesis. Using L-cysteine as substrate, regulates levels of mercaptopyruvate, an important source of hydrogen sulfide. Mercaptopyruvate is converted into H(2)S via the action of 3-mercaptopyruvate sulfurtransferase (3MST). Hydrogen sulfide is an important synaptic modulator and neuroprotectant in the brain. The protein is Aspartate aminotransferase, cytoplasmic of Gallus gallus (Chicken).